The primary structure comprises 284 residues: Bifunctional protein FolD (284 aa).

Residues 165 to 167 (GRS) and Ser-190 contribute to the NADP(+) site.

It belongs to the tetrahydrofolate dehydrogenase/cyclohydrolase family. As to quaternary structure, homodimer.

It catalyses the reaction (6R)-5,10-methylene-5,6,7,8-tetrahydrofolate + NADP(+) = (6R)-5,10-methenyltetrahydrofolate + NADPH. The catalysed reaction is (6R)-5,10-methenyltetrahydrofolate + H2O = (6R)-10-formyltetrahydrofolate + H(+). It functions in the pathway one-carbon metabolism; tetrahydrofolate interconversion. Functionally, catalyzes the oxidation of 5,10-methylenetetrahydrofolate to 5,10-methenyltetrahydrofolate and then the hydrolysis of 5,10-methenyltetrahydrofolate to 10-formyltetrahydrofolate. The chain is Bifunctional protein FolD from Streptococcus pyogenes serotype M2 (strain MGAS10270).